The sequence spans 146 residues: MPKILVDADACPVKAEIKQVAEHFQLDVIFVASFNHYSVNTNGENWIFVDTGKESADMRMMNLAKKGDIIVTQDIGLASILLAKGTFVFSNRGELYREEEMSLMLDIRYRHAKDRQQGKYSKGPKAMSDQDRSLFKDRLTTFLQNK.

The protein belongs to the UPF0178 family.

This chain is UPF0178 protein LMOf2365_1475, found in Listeria monocytogenes serotype 4b (strain F2365).